Here is a 244-residue protein sequence, read N- to C-terminus: Mitophagy receptor atg43 (244 aa).

A disordered region spans residues 1 to 24; sequence MSSESKGIPIPRSDSNKTSDVSSW. Over 1 to 198 the chain is Cytoplasmic; the sequence is MSSESKGIPI…LVALITLRDH (198 aa). The atg8 interacting motif (AIM) motif lies at 28-31; sequence YELI. Residues 105–131 form a disordered region; the sequence is SLSLLQSKEEDDSSNWETEDSESAVEE. Over residues 113–131 the composition is skewed to acidic residues; the sequence is EEDDSSNWETEDSESAVEE. Residues 165-184 are involved in MIM complex binding. Required for normal vegetative cell population growth but is dispensable for mitophagy; sequence PPIPDLRFQQSYLQSIQRAN. The helical transmembrane segment at 199-215 threads the bilayer; that stretch reads VLYPFLSGGMWVFVRHI. Residues 216–244 are Mitochondrial intermembrane-facing; it reads FQFLKLQEKGFHFGQSLRRNLGLFSTFKD.

As to quaternary structure, interacts (via N-terminal atg8 interacting motif) with atg8; the interaction is direct. Interacts with the mitochondrial outer import machinery (MIM) complex subunits mim1 and mim2.

It localises to the mitochondrion outer membrane. In terms of biological role, mitophagy receptor that tethers atg8 to the mitochondrial outer membrane to promote selective autophagy. This chain is Mitophagy receptor atg43, found in Schizosaccharomyces pombe (strain 972 / ATCC 24843) (Fission yeast).